The following is a 175-amino-acid chain: MLTSGTILLAGSLLSPNPGLIFWTAITFVIVLLILKKIAWGPIIGALEEREKGIQSSIDRAEKAKDEAEAILRKNRELLSKADAESEKIVREGKEYAEKLRTDITEKAHTEAAKMIASAKEEIEQEKRRALDVLRNEVADLAVLGAERIIRESLNADMQKKVVASMIQDMSSKRN.

Residues 20 to 40 traverse the membrane as a helical segment; that stretch reads LIFWTAITFVIVLLILKKIAW.

The protein belongs to the ATPase B chain family. F-type ATPases have 2 components, F(1) - the catalytic core - and F(0) - the membrane proton channel. F(1) has five subunits: alpha(3), beta(3), gamma(1), delta(1), epsilon(1). F(0) has four main subunits: a(1), b(2) and c(10-14). The alpha and beta chains form an alternating ring which encloses part of the gamma chain. F(1) is attached to F(0) by a central stalk formed by the gamma and epsilon chains, while a peripheral stalk is formed by the delta and b chains.

Its subcellular location is the cell inner membrane. Functionally, f(1)F(0) ATP synthase produces ATP from ADP in the presence of a proton or sodium gradient. F-type ATPases consist of two structural domains, F(1) containing the extramembraneous catalytic core and F(0) containing the membrane proton channel, linked together by a central stalk and a peripheral stalk. During catalysis, ATP synthesis in the catalytic domain of F(1) is coupled via a rotary mechanism of the central stalk subunits to proton translocation. In terms of biological role, component of the F(0) channel, it forms part of the peripheral stalk, linking F(1) to F(0). In Chlorobium chlorochromatii (strain CaD3), this protein is ATP synthase subunit b.